The primary structure comprises 205 residues: Urease accessory protein UreG (205 aa).

11–18 is a binding site for GTP; it reads GPVGSGKT.

It belongs to the SIMIBI class G3E GTPase family. UreG subfamily. As to quaternary structure, homodimer. UreD, UreF and UreG form a complex that acts as a GTP-hydrolysis-dependent molecular chaperone, activating the urease apoprotein by helping to assemble the nickel containing metallocenter of UreC. The UreE protein probably delivers the nickel.

It is found in the cytoplasm. In terms of biological role, facilitates the functional incorporation of the urease nickel metallocenter. This process requires GTP hydrolysis, probably effectuated by UreG. This chain is Urease accessory protein UreG, found in Prochlorococcus marinus (strain NATL1A).